A 301-amino-acid polypeptide reads, in one-letter code: Protein KTI12 homolog (301 aa).

8 to 15 (GQPCSGKS) provides a ligand contact to ATP. Positions 262 to 275 (LRRTFIKLAGQYSL) are calmodulin-binding.

This sequence belongs to the KTI12 family. As to quaternary structure, interacts with the elongator complex. Binds to calmodulin in a calcium-dependent manner.

It localises to the cytoplasm. It is found in the nucleus. Its function is as follows. Elongator complex-associated factor that is not a structural subunit but rather transiently contacts the complex. Regulates both meristem activity and organ growth; acts as a positive regulator of adaxial leaf patterning. Required for an early step in synthesis of 5-carbamoylmethyl (ncm5) groups present on uridines (ncm5U) at the wobble position in tRNA. In Oryza sativa subsp. indica (Rice), this protein is Protein KTI12 homolog.